The following is a 331-amino-acid chain: MARLYYDADANLDLLSNKTVAIVGYGSQGHAHALNLRDSGVKVVVGLYPGSKSAESARLEGLTVTSVAEAAEVADLIMILLPDEVQKTVYQQEILPHLKPGKVIAFAHGFNIHFAQVVPPADVDVIMVAPKGPGHLVRRTYTQGEGVPCLFAVYQDASGQARDRAMAYAKGIGGTRAGILETTFREETETDLFGEQVVLCGGLTALIKSGFETLVAAGYQPELAYFECLHEVKLIVDLIVEGGLAKMRDSISNTAEYGDYTRGPRIITDETRREMEKILYEIQTGQFAREFVLENMSGKAGFTAMRRREAEHPIEEVGKDLRAMFSWLSKR.

Positions 2–182 (ARLYYDADAN…GGTRAGILET (181 aa)) constitute a KARI N-terminal Rossmann domain. NADP(+) is bound by residues 25–28 (YGSQ), Ser-51, Ser-53, and 83–86 (DEVQ). His-108 is a catalytic residue. Residue Gly-134 coordinates NADP(+). The KARI C-terminal knotted domain occupies 183–328 (TFREETETDL…KDLRAMFSWL (146 aa)). Asp-191, Glu-195, Glu-227, and Glu-231 together coordinate Mg(2+). Ser-252 is a binding site for substrate.

Belongs to the ketol-acid reductoisomerase family. It depends on Mg(2+) as a cofactor.

It catalyses the reaction (2R)-2,3-dihydroxy-3-methylbutanoate + NADP(+) = (2S)-2-acetolactate + NADPH + H(+). The enzyme catalyses (2R,3R)-2,3-dihydroxy-3-methylpentanoate + NADP(+) = (S)-2-ethyl-2-hydroxy-3-oxobutanoate + NADPH + H(+). Its pathway is amino-acid biosynthesis; L-isoleucine biosynthesis; L-isoleucine from 2-oxobutanoate: step 2/4. The protein operates within amino-acid biosynthesis; L-valine biosynthesis; L-valine from pyruvate: step 2/4. Functionally, involved in the biosynthesis of branched-chain amino acids (BCAA). Catalyzes an alkyl-migration followed by a ketol-acid reduction of (S)-2-acetolactate (S2AL) to yield (R)-2,3-dihydroxy-isovalerate. In the isomerase reaction, S2AL is rearranged via a Mg-dependent methyl migration to produce 3-hydroxy-3-methyl-2-ketobutyrate (HMKB). In the reductase reaction, this 2-ketoacid undergoes a metal-dependent reduction by NADPH to yield (R)-2,3-dihydroxy-isovalerate. In Cyanothece sp. (strain PCC 7425 / ATCC 29141), this protein is Ketol-acid reductoisomerase (NADP(+)).